Here is a 317-residue protein sequence, read N- to C-terminus: Small ribosomal subunit protein RACK1 (317 aa).

WD repeat units follow at residues 13–44 (GHSG…IMWK), 61–91 (GHSH…RLWD), 103–133 (GHTK…KLWN), 146–178 (GHTE…KVWN), 190–220 (GHTG…MLWD), 231–260 (DSGD…KIWD), and 281–311 (AEPP…RVWQ).

This sequence belongs to the WD repeat G protein beta family. Ribosomal protein RACK1 subfamily.

The protein resides in the cytoplasm. Its function is as follows. Involved in the recruitment, assembly and/or regulation of a variety of signaling molecules. Interacts with a wide variety of proteins and plays a role in many cellular processes. Required for VANGL2 membrane localization, inhibits Wnt signaling and regulates cellular polarization and oriented cell division during gastrulation. The protein is Small ribosomal subunit protein RACK1 (gnb2l1) of Oreochromis niloticus (Nile tilapia).